The primary structure comprises 216 residues: Large ribosomal subunit protein uL3 (216 aa).

Disordered regions lie at residues Q89 to F108 and N139 to S158. Q157 bears the N5-methylglutamine mark.

It belongs to the universal ribosomal protein uL3 family. As to quaternary structure, part of the 50S ribosomal subunit. Forms a cluster with proteins L14 and L19. In terms of processing, methylated by PrmB.

One of the primary rRNA binding proteins, it binds directly near the 3'-end of the 23S rRNA, where it nucleates assembly of the 50S subunit. The chain is Large ribosomal subunit protein uL3 from Halorhodospira halophila (strain DSM 244 / SL1) (Ectothiorhodospira halophila (strain DSM 244 / SL1)).